A 353-amino-acid chain; its full sequence is Photosystem II protein D1 (353 aa).

Thr2 carries the post-translational modification N-acetylthreonine. Position 2 is a phosphothreonine (Thr2). 3 helical membrane passes run 29 to 46 (YIGWFGVLMIPTLLTATS), 118 to 133 (HFLLGVACYMGREWEL), and 142 to 156 (WIAVAYSAPVAAATA). His118 serves as a coordination point for chlorophyll a. Residue Tyr126 coordinates pheophytin a. 2 residues coordinate [CaMn4O5] cluster: Asp170 and Glu189. The chain crosses the membrane as a helical span at residues 197-218 (FHMLGVAGVFGGSLFSAMHGSL). Position 198 (His198) interacts with chlorophyll a. A quinone is bound by residues His215 and 264 to 265 (SF). His215 provides a ligand contact to Fe cation. His272 is a binding site for Fe cation. The helical transmembrane segment at 274-288 (FLAAWPVVGIWFTAL) threads the bilayer. [CaMn4O5] cluster-binding residues include His332, Glu333, Asp342, and Ala344. Residues 345–353 (AVEVPSING) constitute a propeptide that is removed on maturation.

This sequence belongs to the reaction center PufL/M/PsbA/D family. In terms of assembly, PSII is composed of 1 copy each of membrane proteins PsbA, PsbB, PsbC, PsbD, PsbE, PsbF, PsbH, PsbI, PsbJ, PsbK, PsbL, PsbM, PsbT, PsbX, PsbY, PsbZ, Psb30/Ycf12, at least 3 peripheral proteins of the oxygen-evolving complex and a large number of cofactors. It forms dimeric complexes. Requires The D1/D2 heterodimer binds P680, chlorophylls that are the primary electron donor of PSII, and subsequent electron acceptors. It shares a non-heme iron and each subunit binds pheophytin, quinone, additional chlorophylls, carotenoids and lipids. D1 provides most of the ligands for the Mn4-Ca-O5 cluster of the oxygen-evolving complex (OEC). There is also a Cl(-1) ion associated with D1 and D2, which is required for oxygen evolution. The PSII complex binds additional chlorophylls, carotenoids and specific lipids. as cofactor. Post-translationally, tyr-161 forms a radical intermediate that is referred to as redox-active TyrZ, YZ or Y-Z. In terms of processing, C-terminally processed by CTPA; processing is essential to allow assembly of the oxygen-evolving complex and thus photosynthetic growth.

It localises to the plastid. Its subcellular location is the chloroplast thylakoid membrane. It carries out the reaction 2 a plastoquinone + 4 hnu + 2 H2O = 2 a plastoquinol + O2. In terms of biological role, photosystem II (PSII) is a light-driven water:plastoquinone oxidoreductase that uses light energy to abstract electrons from H(2)O, generating O(2) and a proton gradient subsequently used for ATP formation. It consists of a core antenna complex that captures photons, and an electron transfer chain that converts photonic excitation into a charge separation. The D1/D2 (PsbA/PsbD) reaction center heterodimer binds P680, the primary electron donor of PSII as well as several subsequent electron acceptors. This Cucumis sativus (Cucumber) protein is Photosystem II protein D1.